A 458-amino-acid chain; its full sequence is Elongation factor 1-alpha (458 aa).

Gly2 is modified (n,N,N-trimethylglycine). Lys3 is modified (N6,N6-dimethyllysine; alternate). Lys3 carries the N6-methyllysine; alternate modification. Positions 5-240 (KTHVNVVVIG…DAIEPPVRPS (236 aa)) constitute a tr-type G domain. Positions 14–21 (GHVDSGKS) are G1. 14 to 21 (GHVDSGKS) contributes to the GTP binding site. At Lys30 the chain carries N6-methyllysine. Residues 70–74 (GITID) are G2. An N6,N6,N6-trimethyllysine modification is found at Lys79. Residues 91 to 94 (DAPG) form a G3 region. Residues 91 to 95 (DAPGH) and 153 to 156 (NKMD) contribute to the GTP site. The G4 stretch occupies residues 153 to 156 (NKMD). A G5 region spans residues 192-194 (SGW). Lys316 bears the N6,N6-dimethyllysine; alternate mark. N6-methyllysine; alternate is present on Lys316. Lys390 is modified (N6-methyllysine).

Belongs to the TRAFAC class translation factor GTPase superfamily. Classic translation factor GTPase family. EF-Tu/EF-1A subfamily.

The protein localises to the cytoplasm. This protein promotes the GTP-dependent binding of aminoacyl-tRNA to the A-site of ribosomes during protein biosynthesis. The protein is Elongation factor 1-alpha (TEF-2) of Mucor circinelloides f. lusitanicus (Mucor racemosus var. lusitanicus).